The sequence spans 206 residues: Large ribosomal subunit protein uL3 (206 aa).

A disordered region spans residues 126 to 155; the sequence is HGHAGGPGAHGSRFHRHPGSMGANSTPSRV.

The protein belongs to the universal ribosomal protein uL3 family. In terms of assembly, part of the 50S ribosomal subunit. Forms a cluster with proteins L14 and L19.

In terms of biological role, one of the primary rRNA binding proteins, it binds directly near the 3'-end of the 23S rRNA, where it nucleates assembly of the 50S subunit. The protein is Large ribosomal subunit protein uL3 of Leptospira interrogans serogroup Icterohaemorrhagiae serovar copenhageni (strain Fiocruz L1-130).